The primary structure comprises 450 residues: Saccharopine dehydrogenase [NADP(+), L-glutamate-forming] (450 aa).

NADP(+) is bound by residues 11 to 14 (SGFV), 33 to 35 (CRT), 55 to 56 (DV), Ile76, 98 to 99 (TS), 125 to 127 (LDP), and Ser175. Residues 99 to 100 (SY) and Asp126 contribute to the L-saccharopine site. L-saccharopine contacts are provided by residues Arg224 and 245 to 247 (TLR).

The protein belongs to the saccharopine dehydrogenase family. As to quaternary structure, homodimer.

The enzyme catalyses L-saccharopine + NADP(+) + H2O = (S)-2-amino-6-oxohexanoate + L-glutamate + NADPH + H(+). It functions in the pathway amino-acid biosynthesis; L-lysine biosynthesis via AAA pathway; L-lysine from L-alpha-aminoadipate (fungal route): step 2/3. The chain is Saccharopine dehydrogenase [NADP(+), L-glutamate-forming] (LYS3) from Pyricularia oryzae (strain 70-15 / ATCC MYA-4617 / FGSC 8958) (Rice blast fungus).